The following is a 344-amino-acid chain: Heat-inducible transcription repressor HrcA (344 aa).

The protein belongs to the HrcA family.

In terms of biological role, negative regulator of class I heat shock genes (grpE-dnaK-dnaJ and groELS operons). Prevents heat-shock induction of these operons. The polypeptide is Heat-inducible transcription repressor HrcA (Streptococcus equi subsp. equi (strain 4047)).